Reading from the N-terminus, the 318-residue chain is Probable 3-hydroxyisobutyrate dehydrogenase-like 3, mitochondrial (318 aa).

Residues 35-64 (TRIGWIGIGIMGSAMVSHIIAAGYSVTVYA) and Ser-129 each bind NAD(+). Lys-203 is an active-site residue. Lys-271 contacts NAD(+).

It belongs to the HIBADH-related family. 3-hydroxyisobutyrate dehydrogenase subfamily.

The protein localises to the mitochondrion. It carries out the reaction 3-hydroxy-2-methylpropanoate + NAD(+) = 2-methyl-3-oxopropanoate + NADH + H(+). Its pathway is amino-acid degradation; L-valine degradation. The polypeptide is Probable 3-hydroxyisobutyrate dehydrogenase-like 3, mitochondrial (Arabidopsis thaliana (Mouse-ear cress)).